A 142-amino-acid chain; its full sequence is Complexin (142 aa).

Disordered stretches follow at residues 13 to 70 (QLSA…MRQD) and 83 to 105 (IVEA…PEEL). A coiled-coil region spans residues 29 to 138 (GDDKEKAEEE…NELKTQIEGK (110 aa)). Positions 31–70 (DKEKAEEEERERQEAIKEAEDRRKEKHRKMEEEREKMRQD) are enriched in basic and acidic residues. Cysteine methyl ester is present on Cys139. Cys139 carries the S-farnesyl cysteine lipid modification. Positions 140 to 142 (VMQ) are cleaved as a propeptide — removed in mature form.

It belongs to the complexin/synaphin family. As to quaternary structure, binds to the SNARE core complex containing Snap25, synaptobrevin and Syx1A.

It is found in the membrane. In terms of biological role, positively regulates a late step in synaptic vesicle exocytosis. The chain is Complexin (cpx) from Drosophila melanogaster (Fruit fly).